A 520-amino-acid polypeptide reads, in one-letter code: MQKEKYKKYFEIDGSFKKSFLYPLIFREYIYIVTYARGLNEYGSIFSENLGYDNKLSLLIIKRLITRMNQPDHFKILSTDSEQPTLFRYNNILYFQMISVGLATIIEIPFSLKSLCSFERLHIVKSQNLRSIHSIFPFLEDKLAHLNYVSTGLIPYPIHLEKLVQAVRFWIKDSACLHLLRLFFHEYSNWNSQFISNKLISFIFFCKKEFKTFMVLYNIYIYENESILFFLRNQVFYLRSTFSSFLLERNFFYEKMEQFTEVFDNCFGIVLWLFKDTFMHYARYQGKFFLASKGTPLRIKKWKYYLVNLWQCRFFVWSQPENIYLNSLSKHSVHFLGYLSSLGLNPSVFRSQMVENSFLIDNRKCKLDTKIPIFSLISALEKAKFCNAVGHPISKPTWAHSPDSDIIDRFVCICKNLSHYYSGSSTKSLYRIKYILRLSCVKTLARKHKSTVRIFLKRLGSGLLEEFFTEEKRILSLIPRTSSISQRLYKGRVWYLDIVCINELAHHKNLFMKHGNRNSP.

This sequence belongs to the intron maturase 2 family. MatK subfamily.

It localises to the plastid. It is found in the chloroplast. Usually encoded in the trnK tRNA gene intron. Probably assists in splicing its own and other chloroplast group II introns. The polypeptide is Maturase K (Linum perenne (Perennial flax)).